A 279-amino-acid polypeptide reads, in one-letter code: Ribosomal RNA small subunit methyltransferase A (279 aa).

S-adenosyl-L-methionine is bound by residues Leu42, Gly67, Glu88, Asp113, and Asn129.

This sequence belongs to the class I-like SAM-binding methyltransferase superfamily. rRNA adenine N(6)-methyltransferase family. RsmA subfamily.

The protein localises to the cytoplasm. It carries out the reaction adenosine(1518)/adenosine(1519) in 16S rRNA + 4 S-adenosyl-L-methionine = N(6)-dimethyladenosine(1518)/N(6)-dimethyladenosine(1519) in 16S rRNA + 4 S-adenosyl-L-homocysteine + 4 H(+). Its function is as follows. Specifically dimethylates two adjacent adenosines (A1518 and A1519) in the loop of a conserved hairpin near the 3'-end of 16S rRNA in the 30S particle. May play a critical role in biogenesis of 30S subunits. The polypeptide is Ribosomal RNA small subunit methyltransferase A (Thermotoga maritima (strain ATCC 43589 / DSM 3109 / JCM 10099 / NBRC 100826 / MSB8)).